The following is a 709-amino-acid chain: DNA ligase (709 aa).

Residues 34 to 38 (DAEYD), 83 to 84 (SL), and E115 each bind NAD(+). K117 serves as the catalytic N6-AMP-lysine intermediate. R138, E185, K301, and K325 together coordinate NAD(+). Zn(2+)-binding residues include C419, C422, C437, and C443. Residues 602–691 (RQSDTLAGKT…AEPPPSPPPP (90 aa)) enclose the BRCT domain. The tract at residues 679-709 (GTTAEPPPSPPPPPPETNTDGNQLLLPLDGE) is disordered. Over residues 683–694 (EPPPSPPPPPPE) the composition is skewed to pro residues.

It belongs to the NAD-dependent DNA ligase family. LigA subfamily. The cofactor is Mg(2+). Requires Mn(2+) as cofactor.

It catalyses the reaction NAD(+) + (deoxyribonucleotide)n-3'-hydroxyl + 5'-phospho-(deoxyribonucleotide)m = (deoxyribonucleotide)n+m + AMP + beta-nicotinamide D-nucleotide.. DNA ligase that catalyzes the formation of phosphodiester linkages between 5'-phosphoryl and 3'-hydroxyl groups in double-stranded DNA using NAD as a coenzyme and as the energy source for the reaction. It is essential for DNA replication and repair of damaged DNA. This Chloroflexus aurantiacus (strain ATCC 29364 / DSM 637 / Y-400-fl) protein is DNA ligase.